Consider the following 306-residue polypeptide: Pantothenate kinase (306 aa).

Residue 91–98 (GSVAVGKS) coordinates ATP.

Belongs to the prokaryotic pantothenate kinase family.

Its subcellular location is the cytoplasm. It carries out the reaction (R)-pantothenate + ATP = (R)-4'-phosphopantothenate + ADP + H(+). It participates in cofactor biosynthesis; coenzyme A biosynthesis; CoA from (R)-pantothenate: step 1/5. The protein is Pantothenate kinase of Streptococcus equi subsp. zooepidemicus (strain MGCS10565).